A 616-amino-acid polypeptide reads, in one-letter code: Dihydroxy-acid dehydratase (616 aa).

Residue Asp-81 participates in Mg(2+) binding. [2Fe-2S] cluster is bound at residue Cys-122. Mg(2+)-binding residues include Asp-123 and Lys-124. Lys-124 is modified (N6-carboxylysine). Cys-195 serves as a coordination point for [2Fe-2S] cluster. Position 491 (Glu-491) interacts with Mg(2+). The active-site Proton acceptor is Ser-517.

The protein belongs to the IlvD/Edd family. As to quaternary structure, homodimer. [2Fe-2S] cluster is required as a cofactor. Requires Mg(2+) as cofactor.

It catalyses the reaction (2R)-2,3-dihydroxy-3-methylbutanoate = 3-methyl-2-oxobutanoate + H2O. The catalysed reaction is (2R,3R)-2,3-dihydroxy-3-methylpentanoate = (S)-3-methyl-2-oxopentanoate + H2O. It functions in the pathway amino-acid biosynthesis; L-isoleucine biosynthesis; L-isoleucine from 2-oxobutanoate: step 3/4. The protein operates within amino-acid biosynthesis; L-valine biosynthesis; L-valine from pyruvate: step 3/4. Its function is as follows. Functions in the biosynthesis of branched-chain amino acids. Catalyzes the dehydration of (2R,3R)-2,3-dihydroxy-3-methylpentanoate (2,3-dihydroxy-3-methylvalerate) into 2-oxo-3-methylpentanoate (2-oxo-3-methylvalerate) and of (2R)-2,3-dihydroxy-3-methylbutanoate (2,3-dihydroxyisovalerate) into 2-oxo-3-methylbutanoate (2-oxoisovalerate), the penultimate precursor to L-isoleucine and L-valine, respectively. This Escherichia coli (strain K12 / MC4100 / BW2952) protein is Dihydroxy-acid dehydratase.